We begin with the raw amino-acid sequence, 286 residues long: Putative quercetin 2,3-dioxygenase PA2418 (286 aa).

A divalent metal cation is bound by residues H61, H63, H105, and E107.

It belongs to the pirin family. The cofactor is a divalent metal cation.

It catalyses the reaction quercetin + O2 = 2-(3,4-dihydroxybenzoyloxy)-4,6-dihydroxybenzoate + CO. The protein operates within flavonoid metabolism; quercetin degradation. Functionally, putative quercetin 2,3-dioxygenase. The sequence is that of Putative quercetin 2,3-dioxygenase PA2418 from Pseudomonas aeruginosa (strain ATCC 15692 / DSM 22644 / CIP 104116 / JCM 14847 / LMG 12228 / 1C / PRS 101 / PAO1).